Consider the following 712-residue polypeptide: MSSKNLLVELFVEELPPKALKKLGEAFSAALANSLKNAGLAPATASITAYASPRRLAAHVTDVAAVAADKPVAQKLMPVAVGLDAAGNATPALLKKLAGLGIDADAAASVVASLRRENDGKADVLFFDSLAKGATLAEGLQKAIEAALAALPIPKVMTYQLQDGWSSVNFVRPAHGLVALHGGDVVPVAVLGLNAGRETHGHRFEATVDPVVFANADEYASKLATDGAVIASFAERRAEIARQLEGAAAKAGQATGAALRPIDDEALLDEVTALVERPNVLIGQFEQEFLAVPQECLILTMKANQKYFPLLDATGKLTNKFLVVSNISPEDASAVIGGNERVVRPRLADAKFFFDQDRKKSLESRVIGLSKVVYHNKLGTQGERMQRVAAIARAIGESLGGEALALHAEQAAVLAKADLLTDMVGEFPELQGTMGRYYALHDGLAAEIADAVEDHYKPRFAGDTLPRGIVGTVVALADKLETLVGMFGIGQIPTGDRDPFALRRHALGVIRMLAENNLALPLDHLLQTAAAPFASVDGFKAAEAPLADFIYDRLAGSLREQGYTAQEVDAVVSQRPQRLGDIPKRLAAVRAFSGLPESAALAAANKRVGNILKKVENAVEAVVDNALLKEAAEIALHDALVEVVPQADAAFVTGDYSESLQALAALRAPVDAFFDDVMVNAEDPALRANRLGLLAKLHAAMNQVADISKLSA.

Belongs to the class-II aminoacyl-tRNA synthetase family. As to quaternary structure, tetramer of two alpha and two beta subunits.

Its subcellular location is the cytoplasm. It catalyses the reaction tRNA(Gly) + glycine + ATP = glycyl-tRNA(Gly) + AMP + diphosphate. This is Glycine--tRNA ligase beta subunit from Dechloromonas aromatica (strain RCB).